A 605-amino-acid chain; its full sequence is Sulfite reductase [NADPH] flavoprotein alpha-component (605 aa).

In terms of domain architecture, Flavodoxin-like spans Val68–Leu206. Residues Ser74–Asn78, Ser121–Gly126, and Val154–Ser185 each bind FMN. Residues Gly213–Arg234 are disordered. The FAD-binding FR-type domain occupies Thr235–Pro454. Arg392–Ser395 lines the FAD pocket. Residues Asp495 and Ser525–Tyr533 contribute to the NADP(+) site.

Alpha(8)-beta(8). The alpha component is a flavoprotein, the beta component is a hemoprotein. The cofactor is FAD. FMN serves as cofactor.

The catalysed reaction is hydrogen sulfide + 3 NADP(+) + 3 H2O = sulfite + 3 NADPH + 4 H(+). Its pathway is sulfur metabolism; hydrogen sulfide biosynthesis; hydrogen sulfide from sulfite (NADPH route): step 1/1. In terms of biological role, component of the sulfite reductase complex that catalyzes the 6-electron reduction of sulfite to sulfide. This is one of several activities required for the biosynthesis of L-cysteine from sulfate. The flavoprotein component catalyzes the electron flow from NADPH -&gt; FAD -&gt; FMN to the hemoprotein component. This Bacillus subtilis (strain 168) protein is Sulfite reductase [NADPH] flavoprotein alpha-component (cysJ).